The sequence spans 126 residues: Fatty acid-binding protein, liver (126 aa).

N-acetylalanine is present on Ala-2.

This sequence belongs to the calycin superfamily. Fatty-acid binding protein (FABP) family.

It is found in the cytoplasm. Binds free fatty acids and their coenzyme A derivatives, bilirubin, and some other small molecules in the cytoplasm. May be involved in intracellular lipid transport. This Schroederichthys bivius (Narrowmouthed catshark) protein is Fatty acid-binding protein, liver (fabp1).